Here is a 455-residue protein sequence, read N- to C-terminus: tRNA modification GTPase MnmE (455 aa).

(6S)-5-formyl-5,6,7,8-tetrahydrofolate contacts are provided by arginine 26, glutamate 86, and arginine 125. The region spanning 222–376 (GLKTAIIGRP…VEEKINQIFF (155 aa)) is the TrmE-type G domain. Asparagine 232 lines the K(+) pocket. GTP contacts are provided by residues 232–237 (NVGKSS), 251–257 (TDIAGTT), and 276–279 (DTAG). Serine 236 is a binding site for Mg(2+). Threonine 251, isoleucine 253, and threonine 256 together coordinate K(+). Threonine 257 contributes to the Mg(2+) binding site. Lysine 455 serves as a coordination point for (6S)-5-formyl-5,6,7,8-tetrahydrofolate.

This sequence belongs to the TRAFAC class TrmE-Era-EngA-EngB-Septin-like GTPase superfamily. TrmE GTPase family. As to quaternary structure, homodimer. Heterotetramer of two MnmE and two MnmG subunits. The cofactor is K(+).

The protein localises to the cytoplasm. Exhibits a very high intrinsic GTPase hydrolysis rate. Involved in the addition of a carboxymethylaminomethyl (cmnm) group at the wobble position (U34) of certain tRNAs, forming tRNA-cmnm(5)s(2)U34. This is tRNA modification GTPase MnmE from Lactococcus lactis subsp. lactis (strain IL1403) (Streptococcus lactis).